Consider the following 422-residue polypeptide: Ornithine decarboxylase (422 aa).

The residue at position 71 (Lys71) is an N6-(pyridoxal phosphate)lysine. Pyridoxal 5'-phosphate is bound by residues Ser203, Gly240, and 275 to 278 (EPGR). 331 to 332 (FD) contacts substrate. Residue Cys359 is the Proton donor; shared with dimeric partner of the active site. Residue Asp360 coordinates substrate. Tyr388 contacts pyridoxal 5'-phosphate.

This sequence belongs to the Orn/Lys/Arg decarboxylase class-II family. Homodimer. Only the dimer is catalytically active, as the active sites are constructed of residues from both monomers. Pyridoxal 5'-phosphate serves as cofactor.

The catalysed reaction is L-ornithine + H(+) = putrescine + CO2. The protein operates within amine and polyamine biosynthesis; putrescine biosynthesis via L-ornithine pathway; putrescine from L-ornithine: step 1/1. With respect to regulation, inhibited by antizyme (AZ) in response to polyamine levels. AZ inhibits the assembly of the functional homodimer by binding to ODC monomers and targeting them for ubiquitin-independent proteolytic destruction by the 26S proteasome. In terms of biological role, catalyzes the first and rate-limiting step of polyamine biosynthesis that converts ornithine into putrescine, which is the precursor for the polyamines, spermidine and spermine. Polyamines are essential for cell proliferation and are implicated in cellular processes, ranging from DNA replication to apoptosis. This is Ornithine decarboxylase from Caenorhabditis elegans.